Here is a 790-residue protein sequence, read N- to C-terminus: Lysine biosynthesis regulatory protein LYS14 (790 aa).

Disordered regions lie at residues M1 to E50 and F72 to N157. Positions S35–S47 are enriched in low complexity. Polar residues-rich tracts occupy residues K75 to D113 and T120 to V142. The segment at residues C159 to C186 is a DNA-binding region (zn(2)-C6 fungal-type). The segment at K195 to N258 is disordered. Basic residues predominate over residues A222 to R239.

The protein localises to the nucleus. Its function is as follows. Activates the transcription of lysine biosynthesis genes. This activation is dependent on the inducer alpha-aminoadipate semialdehyde and repressed by lysine. The protein is Lysine biosynthesis regulatory protein LYS14 (LYS14) of Saccharomyces cerevisiae (strain ATCC 204508 / S288c) (Baker's yeast).